The sequence spans 271 residues: TIP41-like protein (271 aa).

Lysine 106 is modified (N6-acetyllysine). The interval 173–271 (RVMPSSFFLL…PVDSQSTPSE (99 aa)) is interaction with PPP2CA. 2 positions are modified to phosphoserine: serine 265 and serine 270.

Belongs to the TIP41 family. In terms of assembly, interacts with PPP2CA. Interacts with PPP2CB, PPP4C and PPP6C. Interacts with IGBP1; the interaction is dependent on PPP2CA. Associates with a protein phosphatase 2A PP2A(C):IGBP1 complex. Interacts with PPP4C and PPP4R2.

It localises to the cytoplasm. Functionally, may be a allosteric regulator of serine/threonine-protein phosphatase 2A (PP2A). Inhibits catalytic activity of the PP2A(D) core complex in vitro. The PP2A(C):TIPRL complex does not show phosphatase activity. Acts as a negative regulator of serine/threonine-protein phosphatase 4 probably by inhibiting the formation of the active PPP4C:PPP4R2 complex; the function is proposed to implicate it in DNA damage response by promoting H2AX phosphorylated on Ser-140 (gamma-H2AX). May play a role in the regulation of ATM/ATR signaling pathway controlling DNA replication and repair. The chain is TIP41-like protein (Tiprl) from Mus musculus (Mouse).